Here is a 1237-residue protein sequence, read N- to C-terminus: Zinc finger protein 687 (1237 aa).

2 disordered regions span residues 1 to 80 (MGDM…PDIS) and 96 to 330 (EALA…PLKV). Residues 97–111 (ALAGGSAGDGAQAAG) show a composition bias toward low complexity. Ser102, Ser129, and Ser140 each carry phosphoserine. Pro residues predominate over residues 132 to 144 (PSLPGTPHSPAPP). At Thr148 the chain carries Phosphothreonine. A phosphoserine mark is found at Ser227, Ser242, Ser251, Ser253, Ser266, and Ser271. Residues 234–244 (LAQQGSGSSPK) show a composition bias toward polar residues. A Glycyl lysine isopeptide (Lys-Gly) (interchain with G-Cter in SUMO2) cross-link involves residue Lys285. The span at 297–310 (SSPGSPQSPSSGAE) shows a compositional bias: low complexity. Residues Lys336 and Lys372 each participate in a glycyl lysine isopeptide (Lys-Gly) (interchain with G-Cter in SUMO2) cross-link. Ser374 carries the post-translational modification Phosphoserine. Thr377 bears the Phosphothreonine mark. Glycyl lysine isopeptide (Lys-Gly) (interchain with G-Cter in SUMO2) cross-links involve residues Lys384, Lys397, and Lys422. Residue Ser433 is modified to Phosphoserine. Residues Lys435, Lys439, Lys451, and Lys464 each participate in a glycyl lysine isopeptide (Lys-Gly) (interchain with G-Cter in SUMO2) cross-link. Ser495 is modified (phosphoserine). A C2H2-type 1; degenerate zinc finger spans residues 533 to 552 (YRCLECGDAFSLEKSLARHY). 5 consecutive C2H2-type zinc fingers follow at residues 705-727 (NVCPTCPMMLPNRCSFSAHQRMH), 764-787 (YRCPSCSVVFGGVNSIKSHIQTSH), 792-815 (HKCPICPMAFKSGPSAHAHLYSQH), 827-849 (YKCAMCDTVFTHKPLLSSHFDQH), and 858-881 (FKCPSCPLLFAQKRTMLEHLKNTH). Over residues 880-890 (THQSGRLEETA) the composition is skewed to basic and acidic residues. A disordered region spans residues 880-957 (THQSGRLEET…LGSKGLKGGG (78 aa)). Phosphothreonine is present on Thr900. The segment covering 915 to 925 (AAPATEESSSS) has biased composition (low complexity). Lys954 participates in a covalent cross-link: Glycyl lysine isopeptide (Lys-Gly) (interchain with G-Cter in SUMO2). C2H2-type zinc fingers lie at residues 963–986 (WTCGLCHSWFPERDEYVAHMKKEH) and 993–1016 (FPCRLCERSFCSAPSLRRHVRVNH). A Glycyl lysine isopeptide (Lys-Gly) (interchain with G-Cter in SUMO2) cross-link involves residue Lys1043. Positions 1051-1121 (LQLGAQSPGR…LRYRSSSSTE (71 aa)) are disordered. Residue Ser1057 is modified to Phosphoserine. The residue at position 1060 (Arg1060) is an Omega-N-methylarginine. Phosphoserine is present on residues Ser1082, Ser1083, and Ser1085. Arg1101 is subject to Omega-N-methylarginine. Phosphoserine occurs at positions 1106 and 1118. The C2H2-type 9 zinc finger occupies 1135 to 1158 (QQCLDCGLCFASPGSLSRHRFISH). The disordered stretch occupies residues 1159–1195 (KKRRGVGKASALGLGDGEEEAPPSRSDPDGGDSPLPA). Residues Ser1184, Ser1191, and Ser1211 each carry the phosphoserine modification. The segment at 1200–1222 (LTCKVCGKSCDSPLNLKTHFRTH) adopts a C2H2-type 10 zinc-finger fold.

The protein belongs to the krueppel C2H2-type zinc-finger protein family. Interacts with ZMYND8. As to expression, widely expressed with highest levels in obvary, muscle, blood and lung.

The protein resides in the cytoplasm. Its subcellular location is the nucleus. Its function is as follows. May be involved in transcriptional regulation. This Homo sapiens (Human) protein is Zinc finger protein 687 (ZNF687).